A 207-amino-acid polypeptide reads, in one-letter code: N-(5'-phosphoribosyl)anthranilate isomerase (207 aa).

This sequence belongs to the TrpF family.

The catalysed reaction is N-(5-phospho-beta-D-ribosyl)anthranilate = 1-(2-carboxyphenylamino)-1-deoxy-D-ribulose 5-phosphate. It participates in amino-acid biosynthesis; L-tryptophan biosynthesis; L-tryptophan from chorismate: step 3/5. The polypeptide is N-(5'-phosphoribosyl)anthranilate isomerase (Legionella pneumophila (strain Lens)).